We begin with the raw amino-acid sequence, 824 residues long: Glycophorin-binding protein 130 (824 aa).

The PEXEL motif motif lies at 84-88; sequence RILAE. 11 disordered regions span residues 97 to 236, 258 to 291, 310 to 334, 358 to 384, 408 to 431, 457 to 482, 507 to 532, 559 to 582, 659 to 683, 711 to 733, and 759 to 783; these read EKTT…GQIM, NTDPNDEVERRNADNKEDLTSADPEGQIMREYAS, DPNDDVERRNADNKEDLTSADPEGQ, NTDPNDEVERRNADNKEDLTSADPEGQ, NTDPNDEVERRNADNKELTSSDPE, NTDPNDEVERRNADNKEDLTSADPEG, DPNDEVERRNADNKEDLTSADPEG, DPNDEVERRNADNKEDLTSADPEGQ, and NDEVERRNADNKEDLTSADPEGQ. 2 stretches are compositionally biased toward basic and acidic residues: residues 117–140 and 174–198; these read TKKDEENKSVVTEEQKVESDSEKQ and KKEESGKPEENKHANEASKKQEPKA. Residues 200–228 are compositionally biased toward polar residues; that stretch reads KVSQKPSTSTRSNNEVKIRAASNQETLTS. GBP repeat units lie at residues 226 to 275, 276 to 325, 326 to 375, 376 to 424, 425 to 474, 475 to 524, 525 to 574, 575 to 624, 625 to 674, 675 to 724, 725 to 774, and 775 to 824; these read LTSA…NKED, LTSA…DNKE, LTSS…NKED, LTSA…NKEE, and LTSA…NNEA. Composition is skewed to basic and acidic residues over residues 264–276, 314–326, 364–376, 414–426, 463–475, 513–525, 563–575, 663–675, 713–725, and 763–775; these read EVERRNADNKEDL, DVERRNADNKEDL, and EVERRNADNKELT.

In terms of assembly, interacts with host glycophorin.

It localises to the secreted. It is found in the cell surface. The protein resides in the host cytoplasm. In terms of biological role, involved in merozoite invasion of host erythrocytes. The protein is Glycophorin-binding protein 130 of Plasmodium falciparum (isolate 3D7).